A 242-amino-acid chain; its full sequence is ATP synthase subunit a (242 aa).

A run of 6 helical transmembrane segments spans residues 29–49 (SAAY…LAFS), 84–104 (FVPV…FGMI), 114–134 (IIIT…VGFV), 140–160 (FLSL…MIII), 189–209 (VIAS…IPLM), and 210–230 (VILI…FTIL).

It belongs to the ATPase A chain family. In terms of assembly, F-type ATPases have 2 components, CF(1) - the catalytic core - and CF(0) - the membrane proton channel. CF(1) has five subunits: alpha(3), beta(3), gamma(1), delta(1), epsilon(1). CF(0) has three main subunits: a(1), b(2) and c(9-12). The alpha and beta chains form an alternating ring which encloses part of the gamma chain. CF(1) is attached to CF(0) by a central stalk formed by the gamma and epsilon chains, while a peripheral stalk is formed by the delta and b chains.

The protein resides in the cell inner membrane. In terms of biological role, key component of the proton channel; it plays a direct role in the translocation of protons across the membrane. This is ATP synthase subunit a from Rickettsia bellii (strain OSU 85-389).